Consider the following 528-residue polypeptide: Probable rhamnogalacturonate lyase A (528 aa).

An N-terminal signal peptide occupies residues 1-20; the sequence is MLSKATLLLSLPFWARVANA. Residue Asn-46 is glycosylated (N-linked (GlcNAc...) asparagine). 2 cysteine pairs are disulfide-bonded: Cys-50–Cys-93 and Cys-184–Cys-193. Asn-351 is a glycosylation site (N-linked (GlcNAc...) asparagine).

The protein belongs to the polysaccharide lyase 4 family.

It is found in the secreted. It carries out the reaction Endotype eliminative cleavage of L-alpha-rhamnopyranosyl-(1-&gt;4)-alpha-D-galactopyranosyluronic acid bonds of rhamnogalacturonan I domains in ramified hairy regions of pectin leaving L-rhamnopyranose at the reducing end and 4-deoxy-4,5-unsaturated D-galactopyranosyluronic acid at the non-reducing end.. Its function is as follows. Pectinolytic enzymes consist of four classes of enzymes: pectin lyase, polygalacturonase, pectin methylesterase and rhamnogalacturonase. Degrades the rhamnogalacturonan I (RG-I) backbone of pectin. This is Probable rhamnogalacturonate lyase A (rglA) from Neosartorya fischeri (strain ATCC 1020 / DSM 3700 / CBS 544.65 / FGSC A1164 / JCM 1740 / NRRL 181 / WB 181) (Aspergillus fischerianus).